Here is a 301-residue protein sequence, read N- to C-terminus: D-alanine--D-alanine ligase A (301 aa).

The ATP-grasp domain maps to 99-293 (KRILAFGNVR…FEELLDTIIE (195 aa)). 126–181 (IENLGYPVFVKPNNGGSSVATTLVESKEAVKDAVLEALKYDTEVMIEEYIKGDEIT) contacts ATP. Residues aspartate 248, glutamate 260, and asparagine 262 each contribute to the Mg(2+) site.

Belongs to the D-alanine--D-alanine ligase family. It depends on Mg(2+) as a cofactor. Requires Mn(2+) as cofactor.

The protein localises to the cytoplasm. The enzyme catalyses 2 D-alanine + ATP = D-alanyl-D-alanine + ADP + phosphate + H(+). Its pathway is cell wall biogenesis; peptidoglycan biosynthesis. Its function is as follows. Cell wall formation. This is D-alanine--D-alanine ligase A from Clostridium perfringens (strain 13 / Type A).